A 313-amino-acid chain; its full sequence is 4-diphosphocytidyl-2-C-methyl-D-erythritol kinase (313 aa).

Lys10 is a catalytic residue. 95-105 (PVTAGLGGGSS) provides a ligand contact to ATP. Asp136 is a catalytic residue. Residues 289–313 (HPRVSPWRSPRSASSRSTRRSSRPT) form a disordered region. A compositionally biased stretch (low complexity) spans 292–304 (VSPWRSPRSASSR).

This sequence belongs to the GHMP kinase family. IspE subfamily.

It carries out the reaction 4-CDP-2-C-methyl-D-erythritol + ATP = 4-CDP-2-C-methyl-D-erythritol 2-phosphate + ADP + H(+). Its pathway is isoprenoid biosynthesis; isopentenyl diphosphate biosynthesis via DXP pathway; isopentenyl diphosphate from 1-deoxy-D-xylulose 5-phosphate: step 3/6. Functionally, catalyzes the phosphorylation of the position 2 hydroxy group of 4-diphosphocytidyl-2C-methyl-D-erythritol. The protein is 4-diphosphocytidyl-2-C-methyl-D-erythritol kinase of Anaeromyxobacter sp. (strain K).